The sequence spans 426 residues: C2H2 type master regulator of conidiophore development brlA (426 aa).

Disordered stretches follow at residues 25–71 and 281–302; these read CPSM…DRGT and GVRLQRQPSRKMARKQPSKQSL. The span at 30–44 shows a compositional bias: low complexity; that stretch reads SSFSPLESPTPTPTS. The segment covering 45 to 58 has biased composition (polar residues); that stretch reads IYSQGSLASPSWPE. The span at 288–297 shows a compositional bias: basic residues; sequence PSRKMARKQP. 2 consecutive C2H2-type zinc fingers follow at residues 316–340 and 346–371; these read FKCKEPGCKGRFKRQEHLKRHMKSH and HVCWVPGCHRAFSRSDNLNAHYTKTH. The tract at residues 384–426 is disordered; that stretch reads LDETSPDYNPDYRGPLTADGRPMPGGTLDESMPSREISMEWDE.

The protein resides in the nucleus. Functionally, brlA, abaA and wetA are pivotal regulators of conidiophore development and conidium maturation. They act individually and together to regulate their own expression and that of numerous other sporulation-specific genes. Binds promoters of target genes at brlA response elements (BREs) containing the conserved sequence 5'-(C/A)(A/G)AGGG(G/A)-3'. Positively regulates expression of the gliotoxin biosynthetic gene cluster in actively growing vegetative cells, and likely bridges morphological and chemical development during the life-cycle. Regulates (directly or indirectly) the ergot cluster genes. Positively regulates expression of the fumiquinazoline C biosynthetic gene cluster. Positively regulates expression of the melanin biosynthetic gene cluster. Mediates repression of ribosomal protein gene expression in response to nitrogen depletion. This Aspergillus fumigatus (strain ATCC MYA-4609 / CBS 101355 / FGSC A1100 / Af293) (Neosartorya fumigata) protein is C2H2 type master regulator of conidiophore development brlA.